A 151-amino-acid chain; its full sequence is Large ribosomal subunit protein bL9 (151 aa).

This sequence belongs to the bacterial ribosomal protein bL9 family.

Functionally, binds to the 23S rRNA. This Acidobacterium capsulatum (strain ATCC 51196 / DSM 11244 / BCRC 80197 / JCM 7670 / NBRC 15755 / NCIMB 13165 / 161) protein is Large ribosomal subunit protein bL9.